We begin with the raw amino-acid sequence, 155 residues long: MRKNRAEKRDVLADPIYNSKLVTRAINKIMLDGKRGIAQSIIYDAFNIIKEKTNKEPIEVFNKAIENIKPHLELKVRRIGGANYQVPIEVSAERQITLALRWLINYARLRNEKVMTIKLANEIIDASNNIGGSVKKREDTHKMAEANKAFAHYRW.

The protein belongs to the universal ribosomal protein uS7 family. In terms of assembly, part of the 30S ribosomal subunit. Contacts proteins S9 and S11.

One of the primary rRNA binding proteins, it binds directly to 16S rRNA where it nucleates assembly of the head domain of the 30S subunit. Is located at the subunit interface close to the decoding center, probably blocks exit of the E-site tRNA. The polypeptide is Small ribosomal subunit protein uS7 (Mycoplasma mycoides subsp. mycoides SC (strain CCUG 32753 / NCTC 10114 / PG1)).